A 375-amino-acid chain; its full sequence is Chaperone protein DnaJ 1 (375 aa).

Positions 4–68 (DYYAILGVER…EKRRIVDMGG (65 aa)) constitute a J domain. Residues 127 to 209 (GTKKPITIDT…CGGDGRVRTQ (83 aa)) form a CR-type zinc finger. Zn(2+) contacts are provided by cysteine 140, cysteine 143, cysteine 157, cysteine 160, cysteine 183, cysteine 186, cysteine 197, and cysteine 200. CXXCXGXG motif repeat units follow at residues 140 to 147 (CDRCEGTG), 157 to 164 (CSTCNGSG), 183 to 190 (CPTCRGTG), and 197 to 204 (CDKCGGDG).

Belongs to the DnaJ family. In terms of assembly, homodimer. The cofactor is Zn(2+).

The protein resides in the cytoplasm. Participates actively in the response to hyperosmotic and heat shock by preventing the aggregation of stress-denatured proteins and by disaggregating proteins, also in an autonomous, DnaK-independent fashion. Unfolded proteins bind initially to DnaJ; upon interaction with the DnaJ-bound protein, DnaK hydrolyzes its bound ATP, resulting in the formation of a stable complex. GrpE releases ADP from DnaK; ATP binding to DnaK triggers the release of the substrate protein, thus completing the reaction cycle. Several rounds of ATP-dependent interactions between DnaJ, DnaK and GrpE are required for fully efficient folding. Also involved, together with DnaK and GrpE, in the DNA replication of plasmids through activation of initiation proteins. This chain is Chaperone protein DnaJ 1, found in Corynebacterium diphtheriae (strain ATCC 700971 / NCTC 13129 / Biotype gravis).